Reading from the N-terminus, the 489-residue chain is Glutamyl-tRNA(Gln) amidotransferase subunit A (489 aa).

Residues lysine 80 and serine 160 each act as charge relay system in the active site. The active-site Acyl-ester intermediate is serine 184.

Belongs to the amidase family. GatA subfamily. As to quaternary structure, heterotrimer of A, B and C subunits.

It carries out the reaction L-glutamyl-tRNA(Gln) + L-glutamine + ATP + H2O = L-glutaminyl-tRNA(Gln) + L-glutamate + ADP + phosphate + H(+). Allows the formation of correctly charged Gln-tRNA(Gln) through the transamidation of misacylated Glu-tRNA(Gln) in organisms which lack glutaminyl-tRNA synthetase. The reaction takes place in the presence of glutamine and ATP through an activated gamma-phospho-Glu-tRNA(Gln). In Wolbachia sp. subsp. Drosophila simulans (strain wRi), this protein is Glutamyl-tRNA(Gln) amidotransferase subunit A.